The chain runs to 393 residues: Protein TsgA (393 aa).

A run of 12 helical transmembrane segments spans residues 11-31, 51-71, 78-98, 101-121, 134-154, 162-182, 206-226, 245-265, 273-293, 297-317, 332-352, and 361-381; these read WISFLSYALTGALVIVTGMVM, FLNAGILISIFLNAWLMEIVP, FGFLLMVLAVAGLMFSHSLAL, TAMFILGVVSGITMSIGTFLI, LLFTDSFFSMAGMIFPMIAAF, WYWVYACIGLVYVAIFILTFG, IGVLFLSVAALCYILGQLGFI, TLVSNFWMSYMVGMWAFSFIL, ILTVLAGLAAILMYVFNTGTP, AWSILALGFFSSAIYTTIITL, FVLTCGTIGTMLTFVVTGPIV, and LLTANGLYAVVFVMCFLLGFV.

The protein belongs to the major facilitator superfamily. TsgA family.

It is found in the cell inner membrane. The sequence is that of Protein TsgA from Shigella boydii serotype 4 (strain Sb227).